The chain runs to 320 residues: Mycothiol acetyltransferase (320 aa).

N-acetyltransferase domains are found at residues 8-141 and 152-320; these read SHLT…RSLR and LQIR…AALA. Glu-36 contributes to the 1D-myo-inositol 2-(L-cysteinylamino)-2-deoxy-alpha-D-glucopyranoside binding site. Acetyl-CoA is bound by residues 80 to 82 and 88 to 93; these read LVV and RRGIAT. Residues Glu-179, Lys-229, and Glu-239 each contribute to the 1D-myo-inositol 2-(L-cysteinylamino)-2-deoxy-alpha-D-glucopyranoside site. Acetyl-CoA is bound by residues 243-245 and 250-256; these read LGV and QGRGLGR. Tyr-284 serves as a coordination point for 1D-myo-inositol 2-(L-cysteinylamino)-2-deoxy-alpha-D-glucopyranoside. 289–294 contributes to the acetyl-CoA binding site; sequence NIAAVR.

Belongs to the acetyltransferase family. MshD subfamily. In terms of assembly, monomer.

It catalyses the reaction 1D-myo-inositol 2-(L-cysteinylamino)-2-deoxy-alpha-D-glucopyranoside + acetyl-CoA = mycothiol + CoA + H(+). In terms of biological role, catalyzes the transfer of acetyl from acetyl-CoA to desacetylmycothiol (Cys-GlcN-Ins) to form mycothiol. The protein is Mycothiol acetyltransferase of Mycobacterium ulcerans (strain Agy99).